A 263-amino-acid chain; its full sequence is Receptor-transporting protein 1 (263 aa).

The Cytoplasmic segment spans residues 1–238 (MRIFRPWRLR…QTGSGWNFCS (238 aa)). The segment at 88–197 (ASGRFHCSWC…GEFCEACQEG (110 aa)) adopts a 3CxxC-type zinc-finger fold. A helical membrane pass occupies residues 239–259 (IPWCLFWATVLLLIIYLQFSF). The Extracellular portion of the chain corresponds to 260 to 263 (RSSV).

It belongs to the TMEM7 family. Interacts with olfactory receptors. Expressed in testis.

It localises to the cell membrane. Its function is as follows. Specifically promotes functional cell surface expression of olfactory receptors, but not of other GPCRs. The polypeptide is Receptor-transporting protein 1 (RTP1) (Homo sapiens (Human)).